We begin with the raw amino-acid sequence, 939 residues long: AP-2 complex subunit alpha (939 aa).

Basic and acidic residues predominate over residues 623-633 (RVPENEIRESK). Residues 623 to 660 (RVPENEIRESKSPAPTSGPGSVLQNNVHVNNSHSKLNN) are disordered. A compositionally biased stretch (polar residues) spans 635 to 660 (PAPTSGPGSVLQNNVHVNNSHSKLNN).

The protein belongs to the adapter complexes large subunit family. In terms of assembly, adaptor protein complex 2 (AP-2) is a heterotetramer composed of two large adaptins (alpha-type and beta-type subunits), a medium adaptin (mu-type subunit AP50) and a small adaptin (sigma-type subunit AP17).

It localises to the cell membrane. The protein localises to the membrane. It is found in the coated pit. Its function is as follows. Adaptins are components of the adapter complexes which link clathrin to receptors in coated vesicles. Clathrin-associated protein complexes are believed to interact with the cytoplasmic tails of membrane proteins, leading to their selection and concentration. Alpha adaptin is a subunit of the plasma membrane adapter. The sequence is that of AP-2 complex subunit alpha from Drosophila pseudoobscura pseudoobscura (Fruit fly).